A 414-amino-acid polypeptide reads, in one-letter code: 2,3-diketo-5-methylthiopentyl-1-phosphate enolase (414 aa).

The Proton acceptor role is filled by Lys-99. Substrate-binding positions include Lys-148, 174 to 177 (KDDE), His-265, Gly-338, and 360 to 361 (GG). 3 residues coordinate Mg(2+): Lys-174, Asp-176, and Glu-177. An N6-carboxylysine modification is found at Lys-174.

The protein belongs to the RuBisCO large chain family. Type IV subfamily. Homodimer. It depends on Mg(2+) as a cofactor.

The enzyme catalyses 5-methylsulfanyl-2,3-dioxopentyl phosphate = 2-hydroxy-5-methylsulfanyl-3-oxopent-1-enyl phosphate. The protein operates within amino-acid biosynthesis; L-methionine biosynthesis via salvage pathway; L-methionine from S-methyl-5-thio-alpha-D-ribose 1-phosphate: step 3/6. Catalyzes the enolization of 2,3-diketo-5-methylthiopentyl-1-phosphate (DK-MTP-1-P) into 2-hydroxy-3-keto-5-methylthiopentenyl-1-phosphate (HK-MTPenyl-1-P). This chain is 2,3-diketo-5-methylthiopentyl-1-phosphate enolase, found in Bacillus cereus (strain ATCC 10987 / NRS 248).